Reading from the N-terminus, the 420-residue chain is Histidine--tRNA ligase (420 aa).

Belongs to the class-II aminoacyl-tRNA synthetase family. As to quaternary structure, homodimer.

Its subcellular location is the cytoplasm. It catalyses the reaction tRNA(His) + L-histidine + ATP = L-histidyl-tRNA(His) + AMP + diphosphate + H(+). The chain is Histidine--tRNA ligase from Mycobacterium marinum (strain ATCC BAA-535 / M).